The sequence spans 285 residues: Acetyl-coenzyme A carboxylase carboxyl transferase subunit beta (285 aa).

Residues 29–285 (IMTKCPKCKK…ILKIHQEVSN (257 aa)) enclose the CoA carboxyltransferase N-terminal domain. Zn(2+)-binding residues include cysteine 33, cysteine 36, cysteine 52, and cysteine 55. The C4-type zinc finger occupies 33–55 (CPKCKKIMYTKELNENLNVCFNC).

Belongs to the AccD/PCCB family. In terms of assembly, acetyl-CoA carboxylase is a heterohexamer composed of biotin carboxyl carrier protein (AccB), biotin carboxylase (AccC) and two subunits each of ACCase subunit alpha (AccA) and ACCase subunit beta (AccD). Requires Zn(2+) as cofactor.

Its subcellular location is the cytoplasm. The enzyme catalyses N(6)-carboxybiotinyl-L-lysyl-[protein] + acetyl-CoA = N(6)-biotinyl-L-lysyl-[protein] + malonyl-CoA. It participates in lipid metabolism; malonyl-CoA biosynthesis; malonyl-CoA from acetyl-CoA: step 1/1. Functionally, component of the acetyl coenzyme A carboxylase (ACC) complex. Biotin carboxylase (BC) catalyzes the carboxylation of biotin on its carrier protein (BCCP) and then the CO(2) group is transferred by the transcarboxylase to acetyl-CoA to form malonyl-CoA. The sequence is that of Acetyl-coenzyme A carboxylase carboxyl transferase subunit beta from Staphylococcus epidermidis (strain ATCC 12228 / FDA PCI 1200).